A 123-amino-acid chain; its full sequence is Small ribosomal subunit protein uS12 (123 aa).

Positions 10-20 (KGRKKVKKKKT) are enriched in basic residues. Positions 10 to 32 (KGRKKVKKKKTAPALQGSPQKRG) are disordered. Position 89 is a 3-methylthioaspartic acid (Asp-89).

It belongs to the universal ribosomal protein uS12 family. Part of the 30S ribosomal subunit. Contacts proteins S8 and S17. May interact with IF1 in the 30S initiation complex.

With S4 and S5 plays an important role in translational accuracy. In terms of biological role, interacts with and stabilizes bases of the 16S rRNA that are involved in tRNA selection in the A site and with the mRNA backbone. Located at the interface of the 30S and 50S subunits, it traverses the body of the 30S subunit contacting proteins on the other side and probably holding the rRNA structure together. The combined cluster of proteins S8, S12 and S17 appears to hold together the shoulder and platform of the 30S subunit. The sequence is that of Small ribosomal subunit protein uS12 from Halothermothrix orenii (strain H 168 / OCM 544 / DSM 9562).